Reading from the N-terminus, the 497-residue chain is Beta-glucosidase 8 (497 aa).

The N-terminal stretch at 1-22 (MKHFNLLSIILVIVLATSYIDA) is a signal peptide. A beta-D-glucoside is bound at residue Gln42. N-linked (GlcNAc...) asparagine glycosylation occurs at Asn65. Residues His139 and 184–185 (NE) each bind a beta-D-glucoside. Glu185 acts as the Proton donor in catalysis. Asn202 carries N-linked (GlcNAc...) asparagine glycosylation. Tyr319 contributes to the a beta-D-glucoside binding site. N-linked (GlcNAc...) asparagine glycosylation is present at Asn354. Residues Glu387, Trp430, and Phe446 each coordinate a beta-D-glucoside. Glu387 (nucleophile) is an active-site residue. 3 N-linked (GlcNAc...) asparagine glycosylation sites follow: Asn452, Asn474, and Asn490.

It belongs to the glycosyl hydrolase 1 family.

The catalysed reaction is Hydrolysis of terminal, non-reducing beta-D-glucosyl residues with release of beta-D-glucose.. The protein is Beta-glucosidase 8 of Arabidopsis thaliana (Mouse-ear cress).